The following is a 111-amino-acid chain: SRA stem-loop-interacting RNA-binding protein, mitochondrial (111 aa).

Positions 19-96 (PVAFVRKIPW…VKLHVQPQRP (78 aa)) constitute an RRM domain. The interval 92–111 (QPQRPKALQGDQTSDEEKDF) is disordered. A Phosphothreonine modification is found at threonine 104. At serine 105 the chain carries Phosphoserine.

The protein localises to the mitochondrion. The protein resides in the nucleus. In terms of biological role, RNA-binding protein that acts as a nuclear receptor corepressor. Probably acts by binding the SRA RNA, and repressing the SRA-mediated nuclear receptor coactivation. Binds the STR7 loop of SRA RNA. Also able to repress glucocorticoid (GR), androgen (AR), thyroid (TR) and VDR-mediated transactivation. The polypeptide is SRA stem-loop-interacting RNA-binding protein, mitochondrial (SLIRP) (Bos taurus (Bovine)).